A 235-amino-acid chain; its full sequence is Interleukin-34 (235 aa).

A signal peptide spans 1–20 (MPWGLAWLYCLGILLDVALG). Residue N100 is glycosylated (N-linked (GlcNAc...) asparagine).

It belongs to the IL-34 family. As to quaternary structure, homodimer. Interacts with CSF1R.

The protein resides in the secreted. Its function is as follows. Cytokine that promotes the proliferation, survival and differentiation of monocytes and macrophages. Promotes the release of pro-inflammatory chemokines, and thereby plays an important role in innate immunity and in inflammatory processes. Plays an important role in the regulation of osteoclast proliferation and differentiation, and in the regulation of bone resorption. Signaling via CSF1R and its downstream effectors stimulates phosphorylation of MAPK1/ERK2 AND MAPK3/ERK1. The polypeptide is Interleukin-34 (Il34) (Mus musculus (Mouse)).